Here is a 592-residue protein sequence, read N- to C-terminus: Calnexin (592 aa).

A signal peptide spans 1-20 (MEGKWLLCMLLVLGTAIVEA). Topologically, residues 21 to 481 (HDGHDDDVID…QMIEAAEERP (461 aa)) are lumenal. Serine 74 and aspartate 117 together coordinate Ca(2+). Lysine 137 is subject to N6-acetyllysine. Cysteine 160 and cysteine 194 are joined by a disulfide. An alpha-D-glucoside-binding residues include tyrosine 164, lysine 166, tyrosine 185, and aspartate 192. The tract at residues 260-345 (GNLLNDMTPP…AEKPEDWDED (86 aa)) is disordered. Residues 274 to 319 (REIEDPEDRKPEDWDERPKIPDPEAVKPDDWDEDAPAKIPDEEATK) show a composition bias toward basic and acidic residues. A p domain (Extended arm) region spans residues 276–409 (IEDPEDRKPE…RKIPNPDFFE (134 aa)). A run of 5 repeats spans residues 278–290 (DPEDRKPEDWDER), 295–307 (DPEAVKPDDWDED), 314–326 (DEEATKPEGWLDD), 333–345 (DPDAEKPEDWDED), and 348–358 (GEWEAPQIANP). 4 X approximate repeats regions lie at residues 278-345 (DPED…WDED) and 348-405 (GEWE…IPNP). A compositionally biased stretch (acidic residues) spans 323 to 345 (WLDDEPEYVPDPDAEKPEDWDED). Residues 326–359 (DEPEYVPDPDAEKPEDWDEDMDGEWEAPQIANPR) form an interaction with PPIB region. The cysteines at positions 360 and 366 are disulfide-linked. Repeat copies occupy residues 367 to 377 (GVWQRPVIDNP), 381 to 391 (GKWKPPMIDNP), and 395 to 405 (GIWKPRKIPNP). Residue glutamate 425 participates in an alpha-D-glucoside binding. Aspartate 436 provides a ligand contact to Ca(2+). Residues 482 to 502 (WLWVVYILTVALPVFLVILFC) form a helical membrane-spanning segment. Residues cysteine 502 and cysteine 503 are each lipidated (S-palmitoyl cysteine). At 503–592 (CSGKKQTSGM…SPRNRKPRRE (90 aa)) the chain is on the cytoplasmic side. Residues 503–592 (CSGKKQTSGM…SPRNRKPRRE (90 aa)) are sufficient to mediate interaction with SGIP1. Residues 511–592 (GMEYKKTDAP…SPRNRKPRRE (82 aa)) are disordered. Acidic residues predominate over residues 525–547 (KEEEEEKEEEKDKGDEEEEGEEK). Phosphoserine is present on serine 554. At threonine 562 the chain carries Phosphothreonine. At serine 564 the chain carries Phosphoserine; by MAPK3. At serine 583 the chain carries Phosphoserine.

Belongs to the calreticulin family. Interacts with MAPK3/ERK1. Interacts with KCNH2. Associates with ribosomes. Interacts with SGIP1; involved in negative regulation of endocytosis. The palmitoylated form interacts with the ribosome-translocon complex component SSR1, promoting efficient folding of glycoproteins. Interacts with SERPINA2P/SERPINA2 and with the S and Z variants of SERPINA1. Interacts with PPIB. Interacts with ZNRF4. Interacts with SMIM22. Interacts with TMX2. Interacts with TMEM35A/NACHO. Interacts with CHRNA7. Interacts with reticulophagy regulators RETREG2 and RETREG3. Interacts with DNM1L; may form part of a larger protein complex at the ER-mitochondrial interface during mitochondrial fission. Interacts with ADAM7. In terms of assembly, (Microbial infection) Interacts with HBV large envelope protein, isoform L. As to quaternary structure, (Microbial infection) Interacts with HBV large envelope protein, isoform M; this association may be essential for isoform M proper secretion. Phosphorylated at Ser-564 by MAPK3/ERK1. Phosphorylation by MAPK3/ERK1 increases its association with ribosomes. In terms of processing, palmitoylation by DHHC6 leads to the preferential localization to the perinuclear rough ER. It mediates the association of calnexin with the ribosome-translocon complex (RTC) which is required for efficient folding of glycosylated proteins. Post-translationally, ubiquitinated, leading to proteasomal degradation. Probably ubiquitinated by ZNRF4.

It localises to the endoplasmic reticulum membrane. Its subcellular location is the mitochondrion membrane. The protein localises to the melanosome membrane. In terms of biological role, calcium-binding protein that interacts with newly synthesized monoglucosylated glycoproteins in the endoplasmic reticulum. It may act in assisting protein assembly and/or in the retention within the ER of unassembled protein subunits. It seems to play a major role in the quality control apparatus of the ER by the retention of incorrectly folded proteins. Associated with partial T-cell antigen receptor complexes that escape the ER of immature thymocytes, it may function as a signaling complex regulating thymocyte maturation. Additionally it may play a role in receptor-mediated endocytosis at the synapse. This chain is Calnexin (CANX), found in Homo sapiens (Human).